A 329-amino-acid polypeptide reads, in one-letter code: SLAM family member 5 (329 aa).

The signal sequence occupies residues 1-21; it reads MAQRHLWIWFLCLQTWSEAAG. Over 22 to 221 the chain is Extracellular; that stretch reads KDADPMVMNG…TPSFHPRHAV (200 aa). An Ig-like V-type domain is found at 26 to 129; it reads PMVMNGILGE…IYYLHIYRRL (104 aa). The 75-residue stretch at 132-206 folds into the Ig-like C2-type domain; the sequence is PKITQSLISS…SNSSDSVTVQ (75 aa). Asn-147 carries N-linked (GlcNAc...) asparagine glycosylation. Cys-152 and Cys-190 are disulfide-bonded. Residues 222-242 form a helical membrane-spanning segment; the sequence is LPGGLAVLFLLILIPMLAFLF. Residues 243-329 are Cytoplasmic-facing; the sequence is RLYKRRRDRI…PKALGNEIVV (87 aa). The ITSM 1 signature appears at 263-268; it reads TVYAVV. Position 265 is a phosphotyrosine (Tyr-265). A Phosphotyrosine; by LYN modification is found at Tyr-280. An ITSM 2 motif is present at residues 298–303; it reads TIYSSV. At Tyr-300 the chain carries Phosphotyrosine.

As to quaternary structure, homodimer; via its extracellular domain. Forms a head to tail dimer with a CD48 molecule from another cell. Interacts with SH2 domain-containing proteins SH2D1A/SAP and SH2D1B/EAT-2. Interacts with tyrosine-protein phosphatases PTPN6/SHP-1 and PTPN11/SHP-2 via its phosphorylated cytoplasmic domain, and this interaction is blocked by SH2D1A. In terms of processing, phosphorylated by tyrosine-protein kinase LCK on tyrosine residues following ligation induced by agonist monoclonal antibody. The association with SH2D1A/SAP is dependent of tyrosine phosphorylation of its cytoplasmic domain. Phosphorylated on Tyr-280 and Tyr-300 following platelet aggregation. Phosphorylated on tyrosine residues upon high affinity immunoglobulin epsilon receptor aggregation in mast cells. N-glycosylated. As to expression, predominantly expressed in hematopoietic tissues such as lymph node, spleen, thymus, and bone marrow. Detected also in lung.

The protein localises to the cell membrane. Functionally, self-ligand receptor of the signaling lymphocytic activation molecule (SLAM) family. SLAM receptors triggered by homo- or heterotypic cell-cell interactions are modulating the activation and differentiation of a wide variety of immune cells and thus are involved in the regulation and interconnection of both innate and adaptive immune response. Activities are controlled by presence or absence of small cytoplasmic adapter proteins, SH2D1A/SAP and/or SH2D1B/EAT-2. Can mediate natural killer (NK) cell cytotoxicity dependent on SH2D1A and SH2D1B. Increases proliferative responses of activated T-cells and SH2D1A/SAP does not seen be required for this process. Homophilic interactions enhance interferon gamma/IFNG secretion in lymphocytes and induce platelet stimulation via a SH2D1A/SAP-dependent pathway. May serve as a marker for hematopoietic progenitor cells. Required for a prolonged T-cell:B-cell contact, optimal T follicular helper function, and germinal center formation. In germinal centers involved in maintaining B cell tolerance and in preventing autoimmunity. In mast cells negatively regulates high affinity immunoglobulin epsilon receptor signaling; independent of SH2D1A and SH2D1B but implicating FES and PTPN6/SHP-1. In macrophages enhances LPS-induced MAPK phosphorylation and NF-kappaB activation and modulates LPS-induced cytokine secretion; involving ITSM 2. Positively regulates macroautophagy in primary dendritic cells via stabilization of IRF8; inhibits TRIM21-mediated proteasomal degradation of IRF8. This chain is SLAM family member 5 (Cd84), found in Mus musculus (Mouse).